A 224-amino-acid polypeptide reads, in one-letter code: Protein-L-isoaspartate O-methyltransferase (224 aa).

The active site involves Ser70.

The protein belongs to the methyltransferase superfamily. L-isoaspartyl/D-aspartyl protein methyltransferase family.

The protein resides in the cytoplasm. The catalysed reaction is [protein]-L-isoaspartate + S-adenosyl-L-methionine = [protein]-L-isoaspartate alpha-methyl ester + S-adenosyl-L-homocysteine. Catalyzes the methyl esterification of L-isoaspartyl residues in peptides and proteins that result from spontaneous decomposition of normal L-aspartyl and L-asparaginyl residues. It plays a role in the repair and/or degradation of damaged proteins. The sequence is that of Protein-L-isoaspartate O-methyltransferase from Cellvibrio japonicus (strain Ueda107) (Pseudomonas fluorescens subsp. cellulosa).